Consider the following 95-residue polypeptide: Aspartyl/glutamyl-tRNA(Asn/Gln) amidotransferase subunit C (95 aa).

It belongs to the GatC family. As to quaternary structure, heterotrimer of A, B and C subunits.

It carries out the reaction L-glutamyl-tRNA(Gln) + L-glutamine + ATP + H2O = L-glutaminyl-tRNA(Gln) + L-glutamate + ADP + phosphate + H(+). It catalyses the reaction L-aspartyl-tRNA(Asn) + L-glutamine + ATP + H2O = L-asparaginyl-tRNA(Asn) + L-glutamate + ADP + phosphate + 2 H(+). In terms of biological role, allows the formation of correctly charged Asn-tRNA(Asn) or Gln-tRNA(Gln) through the transamidation of misacylated Asp-tRNA(Asn) or Glu-tRNA(Gln) in organisms which lack either or both of asparaginyl-tRNA or glutaminyl-tRNA synthetases. The reaction takes place in the presence of glutamine and ATP through an activated phospho-Asp-tRNA(Asn) or phospho-Glu-tRNA(Gln). In Rhizobium etli (strain CIAT 652), this protein is Aspartyl/glutamyl-tRNA(Asn/Gln) amidotransferase subunit C.